Consider the following 299-residue polypeptide: MCDPIREDGSNKRGAVSKEKRPYIHREWSWADIIRALTVINVHFLCLLAPFNYKWEALRFGFVLYALTSLSITFSYHRNLAHRSFKLPKWLEYPLAYFAVFALQGDPLDWVSIHRFHHQFTDSDRDPHSPIEGFWFSHVWWICDTRYIKYKCGGRNNVMDLKQQWFYWFLRMTIGFHVLMFWTVLYLYGGLPYLTCGGGVGGVIGYHVTWLVNSACHIWGSRSWKTKDTSRNVWWLSLFTMGESWHNNHHAFESSARQGLEWWQIDITWYLIRLFEVLGLATDVKLPSEIQKQKLALTR.

The next 2 helical transmembrane spans lie at 31–51 (ADIIRALTVINVHFLCLLAPF) and 55–75 (WEALRFGFVLYALTSLSITFS). Residues 77–82 (HRNLAH) carry the Histidine box-1 motif. Residues 114 to 118 (HRFHH) carry the Histidine box-2 motif. 2 helical membrane-spanning segments follow: residues 174–194 (IGFHVLMFWTVLYLYGGLPYL) and 199–219 (GVGGVIGYHVTWLVNSACHIW). The Histidine box-3 signature appears at 246–250 (HNNHH).

Belongs to the fatty acid desaturase type 1 family. It depends on Fe cation as a cofactor.

The protein resides in the endoplasmic reticulum membrane. It participates in lipid metabolism; polyunsaturated fatty acid biosynthesis. This is Delta-9 desaturase-like 5 protein from Arabidopsis thaliana (Mouse-ear cress).